A 581-amino-acid chain; its full sequence is Interleukin-22 receptor subunit alpha-1 (581 aa).

The signal sequence occupies residues 1-15; that stretch reads MRTLLTILAAGSLLA. Over 16 to 228 the chain is Extracellular; the sequence is HITEDTSDLL…VKTLPDRTWT (213 aa). 2 Fibronectin type-III domains span residues 18 to 115 and 141 to 221; these read TEDT…RFSS and PTYT…RVKT. A disulfide bridge links Cys71 with Cys79. N-linked (GlcNAc...) asparagine glycosylation is present at Asn80. Cysteines 128 and 217 form a disulfide. A helical transmembrane segment spans residues 229–249; that stretch reads YSFSGAFLFSLGFLVAGLCYL. Topologically, residues 250 to 581 are cytoplasmic; that stretch reads SYRYITKPPP…GLALTVQWES (332 aa). 2 disordered regions span residues 354–493 and 539–563; these read QAAP…SSLK and PSDE…LESP. The segment covering 378–389 has biased composition (polar residues); that stretch reads TPQAVSETQLPS. Phosphoserine occurs at positions 410 and 414. The segment covering 440 to 449 has biased composition (polar residues); the sequence is CSPTGLSLQE.

The protein belongs to the type II cytokine receptor family. As to quaternary structure, heterodimer with IL10RB and with IL20RB. Interacts with FBXW12; the interaction promotes ubiquitination of IL22RA1. Ubiquitinated.

The protein localises to the cell membrane. In terms of biological role, component of the receptor for IL20, IL22 and IL24. Component of IL22 receptor formed by IL22RA1 and IL10RB enabling IL22 signaling via JAK/STAT pathways. IL22 also induces activation of MAPK1/MAPK3 and Akt kinases pathways. Component of one of the receptor for IL20 and IL24 formed by IL22RA1 and IL20RB also signaling through STATs activation. Mediates IL24 antiangiogenic activity as well as IL24 inhibitory effect on endothelial cell tube formation and differentiation. The sequence is that of Interleukin-22 receptor subunit alpha-1 (IL22RA1) from Bos taurus (Bovine).